Consider the following 314-residue polypeptide: DNA-directed RNA polymerase subunit alpha (314 aa).

Residues 1–228 (MIEIEKPRIE…EHLNIFVSLT (228 aa)) are alpha N-terminal domain (alpha-NTD). Residues 245-314 (KEKVLEMSIE…DLGLGLRKED (70 aa)) are alpha C-terminal domain (alpha-CTD).

This sequence belongs to the RNA polymerase alpha chain family. As to quaternary structure, homodimer. The RNAP catalytic core consists of 2 alpha, 1 beta, 1 beta' and 1 omega subunit. When a sigma factor is associated with the core the holoenzyme is formed, which can initiate transcription.

It catalyses the reaction RNA(n) + a ribonucleoside 5'-triphosphate = RNA(n+1) + diphosphate. DNA-dependent RNA polymerase catalyzes the transcription of DNA into RNA using the four ribonucleoside triphosphates as substrates. The sequence is that of DNA-directed RNA polymerase subunit alpha from Staphylococcus epidermidis (strain ATCC 35984 / DSM 28319 / BCRC 17069 / CCUG 31568 / BM 3577 / RP62A).